The sequence spans 122 residues: Large ribosomal subunit protein uL14c (122 aa).

Belongs to the universal ribosomal protein uL14 family. In terms of assembly, part of the 50S ribosomal subunit.

It is found in the plastid. Its subcellular location is the chloroplast. Binds to 23S rRNA. The chain is Large ribosomal subunit protein uL14c from Chlorokybus atmophyticus (Soil alga).